The primary structure comprises 236 residues: MINFEATELRLGLPGGNHGGEMAGKNNGKRGFSETVDLKLNLSSTAMDSVSKVDLENMKEKVVKPPAKAQVVGWPPVRSFRKNVMSGQKPTTGDATEGNDKTSGSSGATSSASACATVAYVKVSMDGAPYLRKIDLKLYKTYQDLSNALSKMFSSFTIGNYGPQGMKDFMNESKLIDLLNGSDYVPTYEDKDGDWMLVGDVPWEMFVDSCKRIRIMKGSEAIGLAPRALEKCKNRS.

Positions 9–13 match the EAR-like (transcriptional repression) motif; the sequence is LRLGL. The segment at 82–110 is disordered; that stretch reads KNVMSGQKPTTGDATEGNDKTSGSSGATS. A compositionally biased stretch (polar residues) spans 85–94; that stretch reads MSGQKPTTGD. Residues 118–218 form the PB1 domain; that stretch reads VAYVKVSMDG…SCKRIRIMKG (101 aa).

This sequence belongs to the Aux/IAA family. As to quaternary structure, homodimers and heterodimers.

It localises to the nucleus. In terms of biological role, aux/IAA proteins are short-lived transcriptional factors that function as repressors of early auxin response genes at low auxin concentrations. Repression is thought to result from the interaction with auxin response factors (ARFs), proteins that bind to the auxin-responsive promoter element (AuxRE). Formation of heterodimers with ARF proteins may alter their ability to modulate early auxin response genes expression. The chain is Auxin-responsive protein IAA16 (IAA16) from Arabidopsis thaliana (Mouse-ear cress).